The primary structure comprises 427 residues: Light-independent protochlorophyllide reductase subunit N (427 aa).

Positions 28, 53, and 114 each coordinate [4Fe-4S] cluster.

This sequence belongs to the BchN/ChlN family. Protochlorophyllide reductase is composed of three subunits; BchL, BchN and BchB. Forms a heterotetramer of two BchB and two BchN subunits. Requires [4Fe-4S] cluster as cofactor.

The catalysed reaction is chlorophyllide a + oxidized 2[4Fe-4S]-[ferredoxin] + 2 ADP + 2 phosphate = protochlorophyllide a + reduced 2[4Fe-4S]-[ferredoxin] + 2 ATP + 2 H2O. It participates in porphyrin-containing compound metabolism; bacteriochlorophyll biosynthesis (light-independent). Component of the dark-operative protochlorophyllide reductase (DPOR) that uses Mg-ATP and reduced ferredoxin to reduce ring D of protochlorophyllide (Pchlide) to form chlorophyllide a (Chlide). This reaction is light-independent. The NB-protein (BchN-BchB) is the catalytic component of the complex. The polypeptide is Light-independent protochlorophyllide reductase subunit N (Jannaschia sp. (strain CCS1)).